Here is an 871-residue protein sequence, read N- to C-terminus: DNA mismatch repair protein MutS (871 aa).

Position 625–632 (625–632) interacts with ATP; sequence GPNMAGKS.

It belongs to the DNA mismatch repair MutS family.

Functionally, this protein is involved in the repair of mismatches in DNA. It is possible that it carries out the mismatch recognition step. This protein has a weak ATPase activity. The polypeptide is DNA mismatch repair protein MutS (Chlorobium limicola (strain DSM 245 / NBRC 103803 / 6330)).